Here is a 534-residue protein sequence, read N- to C-terminus: Cytochrome P450 monooxygenase btcB (534 aa).

Asparagine 20 carries N-linked (GlcNAc...) asparagine glycosylation. A helical transmembrane segment spans residues 41-61 (ALAFLCGALLFGFVYSVFYNL). N-linked (GlcNAc...) asparagine glycans are attached at residues asparagine 335, asparagine 413, and asparagine 431. Cysteine 484 provides a ligand contact to heme.

This sequence belongs to the cytochrome P450 family. Heme is required as a cofactor.

The protein localises to the membrane. It functions in the pathway secondary metabolite biosynthesis; terpenoid biosynthesis. In terms of biological role, cytochrome P4590 monooxygenase part of the gene cluster that mediates the biosynthesis of betaestacins. The bifunctional terpene synthase btcA converts isopentenyl diphosphate (IPP) and dimethylallyl diphosphate (DMAPP) into the sesterterpene betaestacin I. The C-terminal prenyltransferase (PT) domain of btcA catalyzes formation of GFPP, whereas the N-terminal terpene cyclase (TC) domain catalyzes the cyclization of GFPP into betaestacin I. The cytochrome P450 monooxygenase btcB oxidizes the C25 methyl group of betaestacin I to yield the carboxylic acid betaestacin IV via the alcohol betaestacin III. The cytochrome P450 monooxygenase btcC further catalyzes the multistep oxidation of betaestacin IV to produce several compounds, including betaestacins Va, Vb, Vc and VI. This is Cytochrome P450 monooxygenase btcB from Colletotrichum orbiculare (strain 104-T / ATCC 96160 / CBS 514.97 / LARS 414 / MAFF 240422) (Cucumber anthracnose fungus).